Reading from the N-terminus, the 396-residue chain is NAD(P)H oxidoreductase RTN4IP1, mitochondrial (396 aa).

A mitochondrion-targeting transit peptide spans 1–40 (MGFLKTCVFRRNACTAVCFWRSQVVQKPSVRKISTTSPRS). In terms of domain architecture, Enoyl reductase (ER) spans 52–393 (GSNEVLRFTQ…RGHARGKTVI (342 aa)). NADPH contacts are provided by Ser214, Gly216, Val217, Ser237, Tyr255, Asn276, Leu300, Ala341, Phe343, His386, Ala387, and Arg388.

Belongs to the zinc-containing alcohol dehydrogenase family. Quinone oxidoreductase subfamily. Interacts with RTN4, UQCRC1 and UQCRC2.

The protein resides in the mitochondrion matrix. Its subcellular location is the mitochondrion outer membrane. It carries out the reaction a 3-demethylubiquinone + NADH + 2 H(+) = a 3-demethylubiquinol + NAD(+). The enzyme catalyses a 3-demethylubiquinone + NADPH + 2 H(+) = a 3-demethylubiquinol + NADP(+). It catalyses the reaction 3-demethylubiquinone-10 + NADH + 2 H(+) = 3-demethylubiquinol-10 + NAD(+). The catalysed reaction is 3-demethylubiquinone-10 + NADPH + 2 H(+) = 3-demethylubiquinol-10 + NADP(+). It functions in the pathway cofactor biosynthesis; ubiquinone biosynthesis. Functionally, NAD(P)H oxidoreductase involved in the ubiquinone biosynthetic pathway. Required for the O-methyltransferase activity of COQ3. Able to catalyze the oxidoreduction of 3-demethylubiquinone into 3-demethylubiquinol in vitro. However, it is unclear if 3-demethylubiquinone constitutes a substrate in vivo. May also play a role in the regulation of retinal ganglion cell (RGC) neurite outgrowth, and hence in the development of the inner retina and optic nerve. Appears to be a potent inhibitor of regeneration following spinal cord injury. This Bos taurus (Bovine) protein is NAD(P)H oxidoreductase RTN4IP1, mitochondrial (RTN4IP1).